Consider the following 386-residue polypeptide: GTPase Obg (386 aa).

An Obg domain is found at 1–159 (MKFVDEAVIR…RSLKLELMLL (159 aa)). In terms of domain architecture, OBG-type G spans 160–333 (ADVGLLGMPN…LSLKLVDFID (174 aa)). GTP contacts are provided by residues 166–173 (GMPNAGKS), 191–195 (FTTLV), 213–216 (DIPG), 283–286 (NKKD), and 314–316 (SAY). Mg(2+) is bound by residues Ser-173 and Thr-193. The disordered stretch occupies residues 356–375 (KDSDSLNEDFDDSDDDDFDD). A compositionally biased stretch (acidic residues) spans 360–375 (SLNEDFDDSDDDDFDD).

This sequence belongs to the TRAFAC class OBG-HflX-like GTPase superfamily. OBG GTPase family. Monomer. The cofactor is Mg(2+).

Its subcellular location is the cytoplasm. In terms of biological role, an essential GTPase which binds GTP, GDP and possibly (p)ppGpp with moderate affinity, with high nucleotide exchange rates and a fairly low GTP hydrolysis rate. Plays a role in control of the cell cycle, stress response, ribosome biogenesis and in those bacteria that undergo differentiation, in morphogenesis control. In Shewanella sediminis (strain HAW-EB3), this protein is GTPase Obg.